We begin with the raw amino-acid sequence, 257 residues long: Type III pantothenate kinase (257 aa).

An ATP-binding site is contributed by 6–13; it reads EQGNTNTL. 107-110 serves as a coordination point for substrate; that stretch reads GADR. The active-site Proton acceptor is the Asp-109. Asp-129 is a K(+) binding site. ATP is bound at residue Thr-132. Thr-184 provides a ligand contact to substrate.

It belongs to the type III pantothenate kinase family. As to quaternary structure, homodimer. The cofactor is NH4(+). K(+) is required as a cofactor.

The protein resides in the cytoplasm. The enzyme catalyses (R)-pantothenate + ATP = (R)-4'-phosphopantothenate + ADP + H(+). It participates in cofactor biosynthesis; coenzyme A biosynthesis; CoA from (R)-pantothenate: step 1/5. In terms of biological role, catalyzes the phosphorylation of pantothenate (Pan), the first step in CoA biosynthesis. In Phenylobacterium zucineum (strain HLK1), this protein is Type III pantothenate kinase.